Consider the following 122-residue polypeptide: Large ribosomal subunit protein uL14 (122 aa).

Belongs to the universal ribosomal protein uL14 family. In terms of assembly, part of the 50S ribosomal subunit. Forms a cluster with proteins L3 and L19. In the 70S ribosome, L14 and L19 interact and together make contacts with the 16S rRNA in bridges B5 and B8.

In terms of biological role, binds to 23S rRNA. Forms part of two intersubunit bridges in the 70S ribosome. This is Large ribosomal subunit protein uL14 from Clostridium botulinum (strain Alaska E43 / Type E3).